The following is an 861-amino-acid chain: Leucine--tRNA ligase (861 aa).

Positions 43-53 (PYPSGKLHMGH) match the 'HIGH' region motif. The 'KMSKS' region signature appears at 588 to 592 (KMSKS). ATP is bound at residue K591.

This sequence belongs to the class-I aminoacyl-tRNA synthetase family.

It is found in the cytoplasm. It catalyses the reaction tRNA(Leu) + L-leucine + ATP = L-leucyl-tRNA(Leu) + AMP + diphosphate. The chain is Leucine--tRNA ligase from Symbiobacterium thermophilum (strain DSM 24528 / JCM 14929 / IAM 14863 / T).